The primary structure comprises 340 residues: Protein pelota homolog (340 aa).

It belongs to the eukaryotic release factor 1 family. Pelota subfamily. As to quaternary structure, monomer. A divalent metal cation is required as a cofactor.

It is found in the cytoplasm. In terms of biological role, may function in recognizing stalled ribosomes, interact with stem-loop structures in stalled mRNA molecules, and effect endonucleolytic cleavage of the mRNA. May play a role in the release non-functional ribosomes and degradation of damaged mRNAs. Has endoribonuclease activity. The chain is Protein pelota homolog from Methanosphaerula palustris (strain ATCC BAA-1556 / DSM 19958 / E1-9c).